The following is a 309-amino-acid chain: Small ribosomal subunit protein mS23 (309 aa).

This sequence belongs to the mitochondrion-specific ribosomal protein mS23 family. In terms of assembly, component of the mitochondrial small ribosomal subunit.

It localises to the mitochondrion. The polypeptide is Small ribosomal subunit protein mS23 (RSM25) (Lodderomyces elongisporus (strain ATCC 11503 / CBS 2605 / JCM 1781 / NBRC 1676 / NRRL YB-4239) (Yeast)).